The following is a 160-amino-acid chain: Protein MGF 300-2R (160 aa).

Belongs to the asfivirus MGF 300 family.

Its function is as follows. Plays a role in virus cell tropism, and may be required for efficient virus replication in macrophages. In Ornithodoros (relapsing fever ticks), this protein is Protein MGF 300-2R.